The following is a 286-amino-acid chain: 33 kDa chaperonin (286 aa).

Cystine bridges form between Cys225-Cys227 and Cys258-Cys261.

Belongs to the HSP33 family. Under oxidizing conditions two disulfide bonds are formed involving the reactive cysteines. Under reducing conditions zinc is bound to the reactive cysteines and the protein is inactive.

It is found in the cytoplasm. Its function is as follows. Redox regulated molecular chaperone. Protects both thermally unfolding and oxidatively damaged proteins from irreversible aggregation. Plays an important role in the bacterial defense system toward oxidative stress. The chain is 33 kDa chaperonin from Shewanella woodyi (strain ATCC 51908 / MS32).